A 239-amino-acid polypeptide reads, in one-letter code: tRNA (guanine-N(7)-)-methyltransferase (239 aa).

A compositionally biased stretch (polar residues) spans 1–13; it reads MEAEVQQGQQSPE. Residues 1 to 30 are disordered; sequence MEAEVQQGQQSPEGQLEKRPPSPPWAGIPL. The S-adenosyl-L-methionine site is built by aspartate 72, glutamate 97, asparagine 124, and aspartate 147. Aspartate 147 is a catalytic residue. Substrate is bound by residues lysine 151 and aspartate 183.

This sequence belongs to the class I-like SAM-binding methyltransferase superfamily. TrmB family.

The catalysed reaction is guanosine(46) in tRNA + S-adenosyl-L-methionine = N(7)-methylguanosine(46) in tRNA + S-adenosyl-L-homocysteine. The protein operates within tRNA modification; N(7)-methylguanine-tRNA biosynthesis. Functionally, catalyzes the formation of N(7)-methylguanine at position 46 (m7G46) in tRNA. This is tRNA (guanine-N(7)-)-methyltransferase from Synechococcus sp. (strain JA-2-3B'a(2-13)) (Cyanobacteria bacterium Yellowstone B-Prime).